The following is a 268-amino-acid chain: Peptide transport system ATP-binding protein SapF (268 aa).

The 246-residue stretch at 6–251 (LEVRNLSKTF…PLHELTKRLI (246 aa)) folds into the ABC transporter domain. 47-54 (GENGSGKS) lines the ATP pocket.

The protein belongs to the ABC transporter superfamily.

The protein localises to the cell inner membrane. Functionally, involved in a peptide intake transport system that plays a role in the resistance to antimicrobial peptides. In Escherichia coli O6:H1 (strain CFT073 / ATCC 700928 / UPEC), this protein is Peptide transport system ATP-binding protein SapF (sapF).